A 1961-amino-acid polypeptide reads, in one-letter code: Myosin-9 (1961 aa).

Alanine 2 bears the N-acetylalanine mark. Positions 2–838 (AQQAADKYLY…RLFTKVKPLL (837 aa)) are mediates interaction with LIMCH1. Lysine 8 is subject to N6-acetyllysine. The residue at position 11 (tyrosine 11) is a Phosphotyrosine. The 51-residue stretch at 27 to 77 (GAKKLVWVPSTKNGFEPASLKEEVGEEAIVELVENGKKVKVNKDDIQKMNP) folds into the Myosin N-terminal SH3-like domain. Residues 81 to 776 (SKVEDMAELT…VLAHLEEERD (696 aa)) enclose the Myosin motor domain. Lysine 102 bears the N6-acetyllysine mark. 174-181 (GESGAGKT) provides a ligand contact to ATP. Lysine 299, lysine 435, and lysine 613 each carry N6-acetyllysine. At serine 628 the chain carries Phosphoserine. The segment at 654 to 676 (LAKLMATLRNTNPNFVCCIIPNH) is actin-binding. A Phosphotyrosine modification is found at tyrosine 754. Residues 779 to 808 (ITDVIIGFQACCRGYLARKAFAKRQQQLTA) enclose the IQ domain. A coiled-coil region spans residues 841–1927 (IRHEDELLAK…LKNKLRRGDM (1087 aa)). Lysine 850 is subject to N6-succinyllysine. N6-acetyllysine occurs at positions 860, 975, and 1024. A compositionally biased stretch (basic and acidic residues) spans 1035-1055 (RLRREEKQRQELEKTRRKLEG). The segment at 1035 to 1057 (RLRREEKQRQELEKTRRKLEGDS) is disordered. Phosphoserine is present on serine 1114. Lysine 1234 and lysine 1249 each carry N6-acetyllysine. Residues 1331 to 1353 (LKQMEDEKNSFREQLEEEEEEAK) are disordered. Positions 1332-1344 (KQMEDEKNSFREQ) are enriched in basic and acidic residues. N6-acetyllysine occurs at positions 1358, 1393, 1405, 1411, 1460, and 1639. The residue at position 1670 (lysine 1670) is an N6-succinyllysine. Serine 1715 is subject to Phosphoserine. Residues lysine 1794, lysine 1803, and lysine 1846 each carry the N6-acetyllysine modification. Positions 1878–1910 (RQLEEAEEEAQRANASRRKLQRELEDATETADA) are disordered. Arginine 1924 carries the omega-N-methylarginine modification. Residues 1938–1961 (KGTGDCSDEEVDGKADGADAKATE) form a disordered region. Position 1944 is a phosphoserine (serine 1944). Over residues 1949–1961 (DGKADGADAKATE) the composition is skewed to basic and acidic residues.

This sequence belongs to the TRAFAC class myosin-kinesin ATPase superfamily. Myosin family. Myosin is a hexameric protein that consists of 2 heavy chain subunits (MHC), 2 alkali light chain subunits (MLC) and 2 regulatory light chain subunits (MLC-2). Interacts with RASIP1. Interacts with DDR1. Interacts with PDLIM2. Interacts with SVIL. Interacts with HTRA3. Interacts with Myo7a. Interacts with CFAP95. Interacts with LIMCH1; independently of the integration of MYH9 into the myosin complex. Interacts with RAB3A. Interacts with ZBED4. Interacts with S100A4; this interaction increases cell motility. Post-translationally, ISGylated. Ubiquitination.

The protein resides in the cytoplasm. It localises to the cytoskeleton. The protein localises to the cell cortex. It is found in the cytoplasmic vesicle. Its subcellular location is the secretory vesicle. The protein resides in the cortical granule. Cellular myosin that appears to play a role in cytokinesis, cell shape, and specialized functions such as secretion and capping. Required for cortical actin clearance prior to oocyte exocytosis. Promotes cell motility in conjunction with S100A4. During cell spreading, plays an important role in cytoskeleton reorganization, focal contact formation (in the margins but not the central part of spreading cells), and lamellipodial retraction; this function is mechanically antagonized by MYH10. The polypeptide is Myosin-9 (Myh9) (Rattus norvegicus (Rat)).